The following is a 623-amino-acid chain: Chaperone protein HtpG (623 aa).

An a; substrate-binding region spans residues 1 to 330; the sequence is MIMTQEKKKF…SEDLPLNISR (330 aa). Positions 331 to 546 are b; sequence ESLQHNSVLE…DAAMDIRMER (216 aa). The interval 477-497 is disordered; that stretch reads SDIDVEQTTSQSEEKNTDSKK. Residues 488-497 show a composition bias toward basic and acidic residues; the sequence is SEEKNTDSKK. Positions 547-623 are c; that stretch reads FLIEQKQIAN…LNDIVQKAIL (77 aa).

The protein belongs to the heat shock protein 90 family. Homodimer.

The protein resides in the cytoplasm. Functionally, molecular chaperone. Has ATPase activity. This chain is Chaperone protein HtpG, found in Rickettsia massiliae (strain Mtu5).